A 343-amino-acid chain; its full sequence is Protein RecA (343 aa).

Residue 64–71 participates in ATP binding; the sequence is GPESSGKT.

This sequence belongs to the RecA family.

Its subcellular location is the cytoplasm. Its function is as follows. Can catalyze the hydrolysis of ATP in the presence of single-stranded DNA, the ATP-dependent uptake of single-stranded DNA by duplex DNA, and the ATP-dependent hybridization of homologous single-stranded DNAs. It interacts with LexA causing its activation and leading to its autocatalytic cleavage. The protein is Protein RecA of Bacillus thuringiensis (strain Al Hakam).